We begin with the raw amino-acid sequence, 145 residues long: Anaerobic nitrite reductase NSHB5 (145 aa).

A Globin domain is found at 2 to 142 (GFSETQEELV…LAAAIKEEMK (141 aa)). Residues 35–39 (EIAPA) carry the Homodimerization motif. Heme b-binding residues include serine 45, histidine 59, lysine 61, arginine 84, threonine 88, and histidine 89. Residues 96-108 (DAYFEVVKTALLD) carry the Homodimerization motif.

It belongs to the plant globin family. Homodimer. Heme b serves as cofactor. As to expression, expressed in embryonic (embryos, coleoptiles and seminal roots) and vegetative (leaves and roots) organs.

The protein localises to the cytoplasm. It is found in the nucleus. It carries out the reaction Fe(III)-heme b-[protein] + nitric oxide + H2O = Fe(II)-heme b-[protein] + nitrite + 2 H(+). In terms of biological role, phytoglobin that reduces nitrite to nitric oxide under anoxic conditions (e.g. during flooding or in waterlogged soil). May not function as an oxygen storage or transport protein. Has an unusually high affinity for O(2) through an hexacoordinate heme iron because of a very low dissociation constant. The polypeptide is Anaerobic nitrite reductase NSHB5 (Oryza sativa subsp. japonica (Rice)).